The chain runs to 499 residues: tRNA (guanine(37)-N(1))-methyltransferase (499 aa).

Residues 1–44 (MKIALPVFQKFNRLISSCKMSGVFPYNPPVNRQMRELDRSFFIT) constitute a mitochondrion transit peptide. S-adenosyl-L-methionine-binding positions include H268, 307–308 (DL), 335–336 (DG), and N399.

The protein belongs to the class I-like SAM-binding methyltransferase superfamily. TRM5/TYW2 family. Monomer.

It is found in the mitochondrion matrix. The protein resides in the nucleus. It localises to the cytoplasm. It carries out the reaction guanosine(37) in tRNA + S-adenosyl-L-methionine = N(1)-methylguanosine(37) in tRNA + S-adenosyl-L-homocysteine + H(+). Specifically methylates the N1 position of guanosine-37 in various cytoplasmic and mitochondrial tRNAs. Methylation is not dependent on the nature of the nucleoside 5' of the target nucleoside. This is the first step in the biosynthesis of wybutosine (yW), a modified base adjacent to the anticodon of tRNAs and required for accurate decoding. Postspliced cytoplasmic tRNAs are imported into the nucleus, where this first step seems to take place, after which they are reexported to the cytoplasm, where the yW sythesis is completed by cytoplasmic enzymes. The polypeptide is tRNA (guanine(37)-N(1))-methyltransferase (Saccharomyces cerevisiae (strain ATCC 204508 / S288c) (Baker's yeast)).